A 396-amino-acid chain; its full sequence is S100P-binding protein (396 aa).

The segment at 145–249 (CDPVLDKDKI…RKNSGSHKSG (105 aa)) is disordered. Composition is skewed to basic and acidic residues over residues 148 to 161 (VLDKDKIDSSKETE) and 168 to 185 (EQTREDDPQPNESKRCTE). Polar residues-rich tracts occupy residues 202-215 (SSPSNNNIEQTASD) and 227-246 (VFSQISNHSEVPNRKNSGSH).

Interacts with S100P.

It is found in the nucleus. The polypeptide is S100P-binding protein (Mus musculus (Mouse)).